Reading from the N-terminus, the 63-residue chain is Sperm protamine P1 (63 aa).

Residues 1–63 (MARYRRHSRS…RYSRRGRRRY (63 aa)) are disordered.

The protein belongs to the protamine P1 family. In terms of tissue distribution, testis.

The protein resides in the nucleus. The protein localises to the chromosome. Protamines substitute for histones in the chromatin of sperm during the haploid phase of spermatogenesis. They compact sperm DNA into a highly condensed, stable and inactive complex. The protein is Sperm protamine P1 (PRM1) of Sminthopsis bindi (Kakadu dunnart).